The primary structure comprises 304 residues: Signal recognition particle receptor FtsY (304 aa).

Residues 109 to 116 (GVNGVGKT), 191 to 195 (DTAGR), and 255 to 258 (TKLD) each bind GTP.

The protein belongs to the GTP-binding SRP family. FtsY subfamily. In terms of assembly, part of the signal recognition particle protein translocation system, which is composed of SRP and FtsY. In terms of processing, sensitive to endogenous proteolytic cleavage between residues 18 and 19 and between residues 86 and 87.

The protein resides in the cell membrane. It localises to the cytoplasm. It catalyses the reaction GTP + H2O = GDP + phosphate + H(+). Functionally, involved in targeting and insertion of nascent membrane proteins into the cytoplasmic membrane. Acts as a receptor for the complex formed by the signal recognition particle (SRP) and the ribosome-nascent chain (RNC). The sequence is that of Signal recognition particle receptor FtsY from Thermus aquaticus.